The sequence spans 277 residues: Knob-associated histidine-rich protein (277 aa).

2 disordered regions span residues 95 to 114 (DGSH…GYGY) and 162 to 277 (SSVN…KKKK). Basic and acidic residues-rich tracts occupy residues 169 to 190 (KHGD…EGEK) and 211 to 220 (KDNEDAESVK). The segment covering 221–237 (SKKHKSHDCEKKKSKKH) has biased composition (basic residues). Basic and acidic residues-rich tracts occupy residues 238–259 (KDNE…GEKH) and 268–277 (KTNEEKKKKK).

The protein localises to the secreted. Its function is as follows. KAHRP might mimick human histidine-rich glycoproteins to anchor host thrombospondin or a parasite analog in a binding complex with the endothelial cell receptor. In Plasmodium falciparum (isolate CDC / Honduras), this protein is Knob-associated histidine-rich protein.